Reading from the N-terminus, the 494-residue chain is Ketol-acid reductoisomerase (NADP(+)) (494 aa).

Positions 14–208 (LDQLGRCRFM…GGHRAGCLES (195 aa)) constitute a KARI N-terminal Rossmann domain. Residues 45–48 (CGAQ), R68, R76, S78, and 108–110 (DKQ) contribute to the NADP(+) site. H132 is an active-site residue. Residue G158 coordinates NADP(+). KARI C-terminal knotted domains lie at 209–344 (SFVA…NYPE) and 345–487 (SDVE…MSDM). Mg(2+) contacts are provided by D217, E221, E389, and E393. S414 contributes to the substrate binding site.

The protein belongs to the ketol-acid reductoisomerase family. Requires Mg(2+) as cofactor.

The catalysed reaction is (2R)-2,3-dihydroxy-3-methylbutanoate + NADP(+) = (2S)-2-acetolactate + NADPH + H(+). It carries out the reaction (2R,3R)-2,3-dihydroxy-3-methylpentanoate + NADP(+) = (S)-2-ethyl-2-hydroxy-3-oxobutanoate + NADPH + H(+). The protein operates within amino-acid biosynthesis; L-isoleucine biosynthesis; L-isoleucine from 2-oxobutanoate: step 2/4. Its pathway is amino-acid biosynthesis; L-valine biosynthesis; L-valine from pyruvate: step 2/4. Functionally, involved in the biosynthesis of branched-chain amino acids (BCAA). Catalyzes an alkyl-migration followed by a ketol-acid reduction of (S)-2-acetolactate (S2AL) to yield (R)-2,3-dihydroxy-isovalerate. In the isomerase reaction, S2AL is rearranged via a Mg-dependent methyl migration to produce 3-hydroxy-3-methyl-2-ketobutyrate (HMKB). In the reductase reaction, this 2-ketoacid undergoes a metal-dependent reduction by NADPH to yield (R)-2,3-dihydroxy-isovalerate. This chain is Ketol-acid reductoisomerase (NADP(+)), found in Aliivibrio fischeri (strain ATCC 700601 / ES114) (Vibrio fischeri).